The primary structure comprises 339 residues: Ketol-acid reductoisomerase (NADP(+)) (339 aa).

The 182-residue stretch at 1–182 folds into the KARI N-terminal Rossmann domain; the sequence is MRVYYDRDAD…GGGRAGIIET (182 aa). NADP(+) is bound by residues 24-27, Arg-48, Ser-51, Ser-53, and 83-86; these read YGSQ and DELQ. The active site involves His-108. Gly-134 contributes to the NADP(+) binding site. Residues 183–328 enclose the KARI C-terminal knotted domain; it reads SFREETETDL…ARLRDMMPWI (146 aa). Mg(2+) contacts are provided by Asp-191, Glu-195, Glu-227, and Glu-231. Ser-252 is a substrate binding site.

It belongs to the ketol-acid reductoisomerase family. Requires Mg(2+) as cofactor.

It carries out the reaction (2R)-2,3-dihydroxy-3-methylbutanoate + NADP(+) = (2S)-2-acetolactate + NADPH + H(+). The catalysed reaction is (2R,3R)-2,3-dihydroxy-3-methylpentanoate + NADP(+) = (S)-2-ethyl-2-hydroxy-3-oxobutanoate + NADPH + H(+). It participates in amino-acid biosynthesis; L-isoleucine biosynthesis; L-isoleucine from 2-oxobutanoate: step 2/4. Its pathway is amino-acid biosynthesis; L-valine biosynthesis; L-valine from pyruvate: step 2/4. Involved in the biosynthesis of branched-chain amino acids (BCAA). Catalyzes an alkyl-migration followed by a ketol-acid reduction of (S)-2-acetolactate (S2AL) to yield (R)-2,3-dihydroxy-isovalerate. In the isomerase reaction, S2AL is rearranged via a Mg-dependent methyl migration to produce 3-hydroxy-3-methyl-2-ketobutyrate (HMKB). In the reductase reaction, this 2-ketoacid undergoes a metal-dependent reduction by NADPH to yield (R)-2,3-dihydroxy-isovalerate. The sequence is that of Ketol-acid reductoisomerase (NADP(+)) from Afipia carboxidovorans (strain ATCC 49405 / DSM 1227 / KCTC 32145 / OM5) (Oligotropha carboxidovorans).